Consider the following 678-residue polypeptide: Probable metal-nicotianamine transporter YSL6 (678 aa).

14 helical membrane passes run Val41 to His61, Leu65 to Val85, Cys113 to Met133, Leu158 to Ala178, Ile226 to Phe246, Ile279 to Ile299, Val324 to Tyr344, Leu394 to Phe414, Trp419 to Gly439, Gly467 to Ala487, Ile512 to Phe532, Ser561 to Ile581, Phe606 to Trp626, and Ile641 to Ile661.

It belongs to the YSL (TC 2.A.67.2) family. As to expression, expressed in roots and leaves.

Its subcellular location is the membrane. Its function is as follows. May be involved in the transport of nicotianamine-chelated metals. The polypeptide is Probable metal-nicotianamine transporter YSL6 (YSL6) (Oryza sativa subsp. japonica (Rice)).